Consider the following 102-residue polypeptide: Apolipoprotein A-II (102 aa).

A signal peptide spans 1–18 (MKLLAMVALLVTICSLEG). M49 carries the methionine sulfoxide modification.

The protein belongs to the apolipoprotein A2 family. In terms of assembly, monomer. Interacts with NAXE and NDRG1. In terms of tissue distribution, plasma.

The protein resides in the secreted. May stabilize HDL (high density lipoprotein) structure by its association with lipids, and affect the HDL metabolism. This is Apolipoprotein A-II (Apoa2) from Rattus norvegicus (Rat).